We begin with the raw amino-acid sequence, 375 residues long: DNA replication and repair protein RecF (375 aa).

30–37 serves as a coordination point for ATP; the sequence is GLNGQGKT.

It belongs to the RecF family.

The protein localises to the cytoplasm. Its function is as follows. The RecF protein is involved in DNA metabolism; it is required for DNA replication and normal SOS inducibility. RecF binds preferentially to single-stranded, linear DNA. It also seems to bind ATP. This is DNA replication and repair protein RecF from Halothermothrix orenii (strain H 168 / OCM 544 / DSM 9562).